We begin with the raw amino-acid sequence, 1396 residues long: DNA-directed RNA polymerase subunit beta' (1396 aa).

Residues C72, C74, C87, and C90 each coordinate Zn(2+). Mg(2+) is bound by residues D463, D465, and D467. C814, C889, C896, and C899 together coordinate Zn(2+).

The protein belongs to the RNA polymerase beta' chain family. The RNAP catalytic core consists of 2 alpha, 1 beta, 1 beta' and 1 omega subunit. When a sigma factor is associated with the core the holoenzyme is formed, which can initiate transcription. Mg(2+) serves as cofactor. It depends on Zn(2+) as a cofactor.

It carries out the reaction RNA(n) + a ribonucleoside 5'-triphosphate = RNA(n+1) + diphosphate. Its function is as follows. DNA-dependent RNA polymerase catalyzes the transcription of DNA into RNA using the four ribonucleoside triphosphates as substrates. The protein is DNA-directed RNA polymerase subunit beta' of Chlamydia trachomatis serovar A (strain ATCC VR-571B / DSM 19440 / HAR-13).